The following is a 151-amino-acid chain: Large ribosomal subunit protein bL9 (151 aa).

It belongs to the bacterial ribosomal protein bL9 family.

Functionally, binds to the 23S rRNA. The protein is Large ribosomal subunit protein bL9 of Prochlorococcus marinus (strain MIT 9515).